The primary structure comprises 478 residues: Aspartyl/glutamyl-tRNA(Asn/Gln) amidotransferase subunit B 2 (478 aa).

It belongs to the GatB/GatE family. GatB subfamily. Heterotrimer of A, B and C subunits.

The catalysed reaction is L-glutamyl-tRNA(Gln) + L-glutamine + ATP + H2O = L-glutaminyl-tRNA(Gln) + L-glutamate + ADP + phosphate + H(+). The enzyme catalyses L-aspartyl-tRNA(Asn) + L-glutamine + ATP + H2O = L-asparaginyl-tRNA(Asn) + L-glutamate + ADP + phosphate + 2 H(+). Its function is as follows. Allows the formation of correctly charged Asn-tRNA(Asn) or Gln-tRNA(Gln) through the transamidation of misacylated Asp-tRNA(Asn) or Glu-tRNA(Gln) in organisms which lack either or both of asparaginyl-tRNA or glutaminyl-tRNA synthetases. The reaction takes place in the presence of glutamine and ATP through an activated phospho-Asp-tRNA(Asn) or phospho-Glu-tRNA(Gln). In Clostridium acetobutylicum (strain ATCC 824 / DSM 792 / JCM 1419 / IAM 19013 / LMG 5710 / NBRC 13948 / NRRL B-527 / VKM B-1787 / 2291 / W), this protein is Aspartyl/glutamyl-tRNA(Asn/Gln) amidotransferase subunit B 2 (gatB2).